The chain runs to 325 residues: Small ribosomal subunit protein uS2 (325 aa).

Residues 212–226 (KEEQAKAEAERERLA) are compositionally biased toward basic and acidic residues. Residues 212–325 (KEEQAKAEAE…TEPKASTGNW (114 aa)) form a disordered region. 2 stretches are compositionally biased toward low complexity: residues 234–247 (QPAAPQQDPDQWAD) and 261–289 (PVTTAPVPTGGAPPVASTTATPATNTGSG). A compositionally biased stretch (polar residues) spans 290–300 (FNQDDWSVPTT).

The protein belongs to the universal ribosomal protein uS2 family. Component of the small ribosomal subunit. Mature ribosomes consist of a small (40S) and a large (60S) subunit. The 40S subunit contains about 33 different proteins and 1 molecule of RNA (18S). The 60S subunit contains about 49 different proteins and 3 molecules of RNA (28S, 5.8S and 5S). Interacts with ribosomal protein S21.

The protein resides in the cytoplasm. Required for the assembly and/or stability of the 40S ribosomal subunit. Required for the processing of the 20S rRNA-precursor to mature 18S rRNA in a late step of the maturation of 40S ribosomal subunits. This Suberites domuncula (Sponge) protein is Small ribosomal subunit protein uS2.